The primary structure comprises 150 residues: Peptide deformylase (150 aa).

Fe cation-binding residues include cysteine 88 and histidine 130. Residue glutamate 131 is part of the active site. Fe cation is bound at residue histidine 134.

It belongs to the polypeptide deformylase family. Fe(2+) serves as cofactor.

The catalysed reaction is N-terminal N-formyl-L-methionyl-[peptide] + H2O = N-terminal L-methionyl-[peptide] + formate. Functionally, removes the formyl group from the N-terminal Met of newly synthesized proteins. Requires at least a dipeptide for an efficient rate of reaction. N-terminal L-methionine is a prerequisite for activity but the enzyme has broad specificity at other positions. The chain is Peptide deformylase from Desulfitobacterium hafniense (strain DSM 10664 / DCB-2).